The primary structure comprises 106 residues: Iron-sulfur cluster assembly protein CyaY (106 aa).

It belongs to the frataxin family.

Functionally, involved in iron-sulfur (Fe-S) cluster assembly. May act as a regulator of Fe-S biogenesis. The sequence is that of Iron-sulfur cluster assembly protein CyaY from Pectobacterium carotovorum subsp. carotovorum (strain PC1).